The following is an 887-amino-acid chain: Integrator complex subunit 6 (887 aa).

Residues 3 to 227 (ILLFLIDTSA…QCLESLVQKV (225 aa)) form the VWFA domain. An Inhibitory loop motif is present at residues 626 to 633 (MMIDEADE). A Phosphoserine modification is found at Ser-804.

It belongs to the Integrator subunit 6 family. As to quaternary structure, component of the Integrator complex, composed of core subunits INTS1, INTS2, INTS3, INTS4, INTS5, INTS6, INTS7, INTS8, INTS9/RC74, INTS10, INTS11/CPSF3L, INTS12, INTS13, INTS14 and INTS15. The core complex associates with protein phosphatase 2A subunits PPP2CA and PPP2R1A, to form the Integrator-PP2A (INTAC) complex. Widely expressed. Expressed in heart, brain, placenta, lung, liver, skeletal muscle, kidney and pancreas.

It localises to the nucleus. The protein resides in the chromosome. Its function is as follows. Component of the integrator complex, a multiprotein complex that terminates RNA polymerase II (Pol II) transcription in the promoter-proximal region of genes. The integrator complex provides a quality checkpoint during transcription elongation by driving premature transcription termination of transcripts that are unfavorably configured for transcriptional elongation: the complex terminates transcription by (1) catalyzing dephosphorylation of the C-terminal domain (CTD) of Pol II subunit POLR2A and SUPT5H/SPT5, (2) degrading the exiting nascent RNA transcript via endonuclease activity and (3) promoting the release of Pol II from bound DNA. The integrator complex is also involved in terminating the synthesis of non-coding Pol II transcripts, such as enhancer RNAs (eRNAs), small nuclear RNAs (snRNAs), telomerase RNAs and long non-coding RNAs (lncRNAs). Within the integrator complex, INTS6 acts as a molecular adapter that promotes assembly of protein phosphatase 2A (PP2A) subunits to the integrator core complex, promoting recruitment of PP2A to transcription pause-release checkpoint. Mediates recruitment of cytoplasmic dynein to the nuclear envelope, probably as component of the integrator complex. May have a tumor suppressor role; an ectopic expression suppressing tumor cell growth. The protein is Integrator complex subunit 6 of Homo sapiens (Human).